The following is a 153-amino-acid chain: Small ribosomal subunit protein uS5c (153 aa).

The region spanning 11–74 (WQERVIQIRR…VDAKKQLINI (64 aa)) is the S5 DRBM domain.

The protein belongs to the universal ribosomal protein uS5 family. In terms of assembly, part of the 30S ribosomal subunit. Contacts protein S4.

Its subcellular location is the plastid. The protein localises to the chloroplast. Functionally, with S4 and S12 plays an important role in translational accuracy. This chain is Small ribosomal subunit protein uS5c (rps5), found in Cyanidioschyzon merolae (strain NIES-3377 / 10D) (Unicellular red alga).